Here is a 257-residue protein sequence, read N- to C-terminus: MEFIDNIRYKKIKNAVGRAVADFGLIRDGDRIAVAVSGGKDSYTLLHILEGLRRRAPVKYELVAVTIDSGYPGFRSDVIASYLREQGFAHHLETTDHYDIIREKRRPGSSYCSICARLKRGVLYTLAQKLGCNKLALGHHLDDFVETLLLNQFFVGTLKAMAPRMLADNGETTVIRPLVYVEEREIIPFARENRFPVVCCSCPVCGTADLQRRRMKKLLTELEKENPAVKRSLLRALGNVQPRYLLDLELQRLCDVP.

The PP-loop motif motif lies at 37-42; sequence SGGKDS. [4Fe-4S] cluster contacts are provided by Cys-112, Cys-115, and Cys-202.

It belongs to the TtcA family. In terms of assembly, homodimer. Requires Mg(2+) as cofactor. [4Fe-4S] cluster serves as cofactor.

It localises to the cytoplasm. The enzyme catalyses cytidine(32) in tRNA + S-sulfanyl-L-cysteinyl-[cysteine desulfurase] + AH2 + ATP = 2-thiocytidine(32) in tRNA + L-cysteinyl-[cysteine desulfurase] + A + AMP + diphosphate + H(+). Its pathway is tRNA modification. Its function is as follows. Catalyzes the ATP-dependent 2-thiolation of cytidine in position 32 of tRNA, to form 2-thiocytidine (s(2)C32). The sulfur atoms are provided by the cysteine/cysteine desulfurase (IscS) system. The polypeptide is tRNA-cytidine(32) 2-sulfurtransferase (Geobacter sulfurreducens (strain ATCC 51573 / DSM 12127 / PCA)).